The sequence spans 297 residues: HTH-type transcriptional regulator ArgP (297 aa).

The region spanning 4–60 (PDYRTLQALDAVIRERGFERAAQKLCITQSAVSQRIKQLENLFGQPLLVRTIPPRPT) is the HTH lysR-type domain. The segment at residues 21 to 40 (FERAAQKLCITQSAVSQRIK) is a DNA-binding region (H-T-H motif).

Belongs to the LysR transcriptional regulatory family. In terms of assembly, homodimer.

Its function is as follows. Controls the transcription of genes involved in arginine and lysine metabolism. This chain is HTH-type transcriptional regulator ArgP, found in Pectobacterium carotovorum subsp. carotovorum (strain PC1).